A 43-amino-acid polypeptide reads, in one-letter code: Metallothionein B (43 aa).

Residues 1 to 16 (SCAGSCKCKNCRCRSC) are beta. C2, C6, C8, C11, C13, C16, C20, C21, C23, C24, C28, C31, C35, and C37 together coordinate a divalent metal cation. Residues 17-43 (RKSCCSCCPAGCNNCVKGCVCKEPASS) are alpha.

The protein belongs to the metallothionein superfamily. Type 1 family.

Its function is as follows. Metallothioneins have a high content of cysteine residues that bind various heavy metals. In Colinus virginianus (Northern bobwhite), this protein is Metallothionein B.